The primary structure comprises 616 residues: Putative L-type lectin-domain containing receptor kinase I.10 (616 aa).

The N-terminal stretch at 1-22 (MAWGLFQILMISFFHLIKLSSQ) is a signal peptide. Topologically, residues 23-288 (QETSFVYETF…RAEHKNLSPL (266 aa)) are extracellular. The segment at 24–258 (ETSFVYETFR…YQYVLSWSFS (235 aa)) is legume-lectin like. N-linked (GlcNAc...) asparagine glycosylation is found at Asn56, Asn124, Asn181, Asn204, and Asn225. A helical membrane pass occupies residues 289-309 (FIDLLGFLAIMGLCTLTGMYF). Residues 310–616 (FKRGKYAEIT…SAASSATNSP (307 aa)) are Cytoplasmic-facing. The Protein kinase domain maps to 343 to 616 (FHKDGFLGKG…SAASSATNSP (274 aa)). ATP-binding positions include 349 to 357 (LGKGGFGEV) and Lys371. Residue Asp467 is the Proton acceptor of the active site.

The protein in the C-terminal section; belongs to the protein kinase superfamily. Ser/Thr protein kinase family. In the N-terminal section; belongs to the leguminous lectin family.

The protein resides in the cell membrane. It carries out the reaction L-seryl-[protein] + ATP = O-phospho-L-seryl-[protein] + ADP + H(+). It catalyses the reaction L-threonyl-[protein] + ATP = O-phospho-L-threonyl-[protein] + ADP + H(+). This chain is Putative L-type lectin-domain containing receptor kinase I.10 (LECRK110), found in Arabidopsis thaliana (Mouse-ear cress).